A 657-amino-acid polypeptide reads, in one-letter code: Leishmanolysin (657 aa).

Positions 1 to 41 (MSVDSSSSSTHRRRCVAARLVRLAAAGAAVTVAVGTAAAWA) are cleaved as a signal peptide. A propeptide spans 42 to 102 (HAGALQHRCI…DPRPGSAPTV (61 aa)) (activation peptide). Residues 44 to 611 (GALQHRCIHD…DRMVGLATAA (568 aa)) lie on the Extracellular side of the membrane. Asn107 carries an N-linked (GlcNAc...) asparagine glycan. Intrachain disulfides connect Cys127-Cys144 and Cys193-Cys232. His266 contributes to the Zn(2+) binding site. Residue Glu267 is part of the active site. His270 contributes to the Zn(2+) binding site. The N-linked (GlcNAc...) asparagine glycan is linked to Asn302. 7 disulfide bridges follow: Cys316/Cys388, Cys395/Cys458, Cys408/Cys427, Cys417/Cys492, Cys469/Cys513, Cys518/Cys568, and Cys538/Cys561. His336 is a binding site for Zn(2+). 5 N-linked (GlcNAc...) asparagine glycosylation sites follow: Asn399, Asn409, Asn445, Asn466, and Asn501. The chain crosses the membrane as a helical span at residues 612–632 (TVLLGMVLSLMALVVVWLLLV). Topologically, residues 633–657 (SCPWWCCKLGGPPASVTPACSPETE) are cytoplasmic.

The protein belongs to the peptidase M8 family. Zn(2+) is required as a cofactor.

It is found in the membrane. The catalysed reaction is Preference for hydrophobic residues at P1 and P1' and basic residues at P2' and P3'. A model nonapeptide is cleaved at -Ala-Tyr-|-Leu-Lys-Lys-.. Has an integral role during the infection of macrophages in the mammalian host. This chain is Leishmanolysin (mspC), found in Leishmania tropica.